A 130-amino-acid polypeptide reads, in one-letter code: Small ribosomal subunit protein uS9 (130 aa).

This sequence belongs to the universal ribosomal protein uS9 family.

This is Small ribosomal subunit protein uS9 (rpsI) from Haemophilus influenzae (strain ATCC 51907 / DSM 11121 / KW20 / Rd).